We begin with the raw amino-acid sequence, 329 residues long: Putative oligopeptide transport ATP-binding protein YkfD (329 aa).

In terms of domain architecture, ABC transporter spans 7-252 (LEVSQLKMHF…PLHPYTKALL (246 aa)). 44–51 (GESGCGKS) lines the ATP pocket.

The protein belongs to the ABC transporter superfamily.

This chain is Putative oligopeptide transport ATP-binding protein YkfD (ykfD), found in Bacillus subtilis (strain 168).